A 302-amino-acid chain; its full sequence is Pseudouridine-5'-phosphate glycosidase (302 aa).

The active-site Proton donor is the E25. Positions 86 and 106 each coordinate substrate. D138 is a Mn(2+) binding site. 140–142 (SAD) contributes to the substrate binding site. K159 (nucleophile) is an active-site residue.

The protein belongs to the pseudouridine-5'-phosphate glycosidase family. In terms of assembly, homotrimer. Requires Mn(2+) as cofactor.

The catalysed reaction is D-ribose 5-phosphate + uracil = psi-UMP + H2O. Catalyzes the reversible cleavage of pseudouridine 5'-phosphate (PsiMP) to ribose 5-phosphate and uracil. Functions biologically in the cleavage direction, as part of a pseudouridine degradation pathway. The sequence is that of Pseudouridine-5'-phosphate glycosidase from Glaesserella parasuis serovar 5 (strain SH0165) (Haemophilus parasuis).